Reading from the N-terminus, the 286-residue chain is Pantothenate synthetase (286 aa).

30-37 (MGNLHSGH) is an ATP binding site. H37 functions as the Proton donor in the catalytic mechanism. Q61 lines the (R)-pantoate pocket. Q61 provides a ligand contact to beta-alanine. 149–152 (GQKD) serves as a coordination point for ATP. (R)-pantoate is bound at residue Q155. ATP contacts are provided by residues V178 and 186–189 (LSSR).

Belongs to the pantothenate synthetase family. In terms of assembly, homodimer.

Its subcellular location is the cytoplasm. It catalyses the reaction (R)-pantoate + beta-alanine + ATP = (R)-pantothenate + AMP + diphosphate + H(+). The protein operates within cofactor biosynthesis; (R)-pantothenate biosynthesis; (R)-pantothenate from (R)-pantoate and beta-alanine: step 1/1. Catalyzes the condensation of pantoate with beta-alanine in an ATP-dependent reaction via a pantoyl-adenylate intermediate. The protein is Pantothenate synthetase of Pseudomonas fluorescens (strain ATCC BAA-477 / NRRL B-23932 / Pf-5).